A 365-amino-acid polypeptide reads, in one-letter code: S-adenosylmethionine:tRNA ribosyltransferase-isomerase (365 aa).

Belongs to the QueA family. Monomer.

It localises to the cytoplasm. The enzyme catalyses 7-aminomethyl-7-carbaguanosine(34) in tRNA + S-adenosyl-L-methionine = epoxyqueuosine(34) in tRNA + adenine + L-methionine + 2 H(+). The protein operates within tRNA modification; tRNA-queuosine biosynthesis. In terms of biological role, transfers and isomerizes the ribose moiety from AdoMet to the 7-aminomethyl group of 7-deazaguanine (preQ1-tRNA) to give epoxyqueuosine (oQ-tRNA). The polypeptide is S-adenosylmethionine:tRNA ribosyltransferase-isomerase (Rickettsia conorii (strain ATCC VR-613 / Malish 7)).